The primary structure comprises 310 residues: ADP-L-glycero-D-manno-heptose-6-epimerase (310 aa).

Residues 10–11 (FI), 31–32 (DN), Lys-38, Lys-53, 75–79 (EGACS), and Asn-92 each bind NADP(+). Tyr-140 (proton acceptor) is an active-site residue. Lys-144 is a binding site for NADP(+). Asn-169 contacts substrate. 2 residues coordinate NADP(+): Val-170 and Lys-178. Catalysis depends on Lys-178, which acts as the Proton acceptor. Substrate-binding positions include Ser-180, His-187, 201–204 (FEGS), and Arg-209. Lys-267 is subject to N6-acetyllysine. Position 272 (Tyr-272) interacts with substrate.

It belongs to the NAD(P)-dependent epimerase/dehydratase family. HldD subfamily. In terms of assembly, homopentamer. It depends on NADP(+) as a cofactor.

The enzyme catalyses ADP-D-glycero-beta-D-manno-heptose = ADP-L-glycero-beta-D-manno-heptose. Its pathway is nucleotide-sugar biosynthesis; ADP-L-glycero-beta-D-manno-heptose biosynthesis; ADP-L-glycero-beta-D-manno-heptose from D-glycero-beta-D-manno-heptose 7-phosphate: step 4/4. Functionally, catalyzes the interconversion between ADP-D-glycero-beta-D-manno-heptose and ADP-L-glycero-beta-D-manno-heptose via an epimerization at carbon 6 of the heptose. In Shigella boydii serotype 18 (strain CDC 3083-94 / BS512), this protein is ADP-L-glycero-D-manno-heptose-6-epimerase.